A 79-amino-acid chain; its full sequence is Cell division topological specificity factor (79 aa).

It belongs to the MinE family.

Its function is as follows. Prevents the cell division inhibition by proteins MinC and MinD at internal division sites while permitting inhibition at polar sites. This ensures cell division at the proper site by restricting the formation of a division septum at the midpoint of the long axis of the cell. The polypeptide is Cell division topological specificity factor (Nitratiruptor sp. (strain SB155-2)).